Here is a 358-residue protein sequence, read N- to C-terminus: Thiol protease aleurain (358 aa).

Positions 1–21 (MSAKTILSSVVLVVLVAASAA) are cleaved as a signal peptide. The interval 22–42 (ANIGFDESNPIRMVSDGLREV) is interaction with VSR1. Residues 22 to 140 (ANIGFDESNP…KGSHKVTEAA (119 aa)) constitute a propeptide, activation peptide. A glycan (N-linked (GlcNAc...) asparagine) is linked at Asn-125. Intrachain disulfides connect Cys-162-Cys-205 and Cys-196-Cys-238. Cys-165 is a catalytic residue. An N-linked (GlcNAc...) asparagine glycan is attached at Asn-254. An intrachain disulfide couples Cys-296 to Cys-346. Catalysis depends on residues His-305 and Asn-325.

Belongs to the peptidase C1 family. As to quaternary structure, interacts with VSR1/BP80B. Expressed in leaves (at protein level).

The protein resides in the vacuole. The catalysed reaction is Hydrolysis of proteins, acting as an aminopeptidase (notably, cleaving Arg-|-Xaa bonds) as well as an endopeptidase.. In terms of biological role, may play a role in proteolysis leading to mobilization of nitrogen during senescence and starvation. This is Thiol protease aleurain from Arabidopsis thaliana (Mouse-ear cress).